A 423-amino-acid chain; its full sequence is Serine--tRNA ligase (423 aa).

231 to 233 (TGE) is a binding site for L-serine. 262-264 (RSE) lines the ATP pocket. Glu285 lines the L-serine pocket. 349-352 (EISS) contributes to the ATP binding site. L-serine is bound at residue Ser385.

Belongs to the class-II aminoacyl-tRNA synthetase family. Type-1 seryl-tRNA synthetase subfamily. Homodimer. The tRNA molecule binds across the dimer.

It localises to the cytoplasm. It carries out the reaction tRNA(Ser) + L-serine + ATP = L-seryl-tRNA(Ser) + AMP + diphosphate + H(+). The enzyme catalyses tRNA(Sec) + L-serine + ATP = L-seryl-tRNA(Sec) + AMP + diphosphate + H(+). It functions in the pathway aminoacyl-tRNA biosynthesis; selenocysteinyl-tRNA(Sec) biosynthesis; L-seryl-tRNA(Sec) from L-serine and tRNA(Sec): step 1/1. Catalyzes the attachment of serine to tRNA(Ser). Is also able to aminoacylate tRNA(Sec) with serine, to form the misacylated tRNA L-seryl-tRNA(Sec), which will be further converted into selenocysteinyl-tRNA(Sec). The sequence is that of Serine--tRNA ligase from Coxiella burnetii (strain CbuG_Q212) (Coxiella burnetii (strain Q212)).